We begin with the raw amino-acid sequence, 171 residues long: Terminase, small subunit (171 aa).

This sequence belongs to the P23virus small terminase family. As to quaternary structure, homononamer; forms a ring-like structure through which genomic DNA is translocated into the capsid. Heterodimer with the terminase large subunit; the active complex is probably heterooligomeric.

Its function is as follows. The terminase small subunit binds to the packaging initiation site and regulates the ATPase activity of the terminase large subunit. The terminase lies at a unique vertex of the procapsid and is composed of two subunits, a small terminase subunit involved in viral DNA recognition (packaging sequence), and a large terminase subunit. Both terminase subunits heterooligomerize and are docked on the portal protein to form the packaging machine. The protein is Terminase, small subunit of Thermus virus P23-45 (Thermus thermophilus phage P23-45).